The chain runs to 536 residues: Phosphoenolpyruvate carboxykinase (ATP) (536 aa).

Residues Arg-61, Tyr-195, and Lys-201 each contribute to the substrate site. Residues Lys-201, His-220, and 236 to 244 each bind ATP; that span reads GLSGTGKTT. Residues Lys-201 and His-220 each contribute to the Mn(2+) site. Asp-257 is a Mn(2+) binding site. The ATP site is built by Glu-285, Arg-322, and Thr-447. Position 322 (Arg-322) interacts with substrate.

It belongs to the phosphoenolpyruvate carboxykinase (ATP) family. Requires Mn(2+) as cofactor.

It is found in the cytoplasm. It catalyses the reaction oxaloacetate + ATP = phosphoenolpyruvate + ADP + CO2. Its pathway is carbohydrate biosynthesis; gluconeogenesis. In terms of biological role, involved in the gluconeogenesis. Catalyzes the conversion of oxaloacetate (OAA) to phosphoenolpyruvate (PEP) through direct phosphoryl transfer between the nucleoside triphosphate and OAA. The protein is Phosphoenolpyruvate carboxykinase (ATP) of Sinorhizobium fredii (strain NBRC 101917 / NGR234).